We begin with the raw amino-acid sequence, 663 residues long: Leishmanolysin-like peptidase (663 aa).

His246 is a binding site for Zn(2+). Glu247 is an active-site residue. Zn(2+) is bound by residues His250 and His353.

It belongs to the peptidase M8 family. It depends on Zn(2+) as a cofactor.

It is found in the cytoplasm. Functionally, metalloprotease. The sequence is that of Leishmanolysin-like peptidase from Caenorhabditis briggsae.